We begin with the raw amino-acid sequence, 244 residues long: Cell division protein ZapD (244 aa).

Belongs to the ZapD family. In terms of assembly, interacts with FtsZ.

The protein localises to the cytoplasm. Cell division factor that enhances FtsZ-ring assembly. Directly interacts with FtsZ and promotes bundling of FtsZ protofilaments, with a reduction in FtsZ GTPase activity. This Shewanella baltica (strain OS223) protein is Cell division protein ZapD.